The following is a 117-amino-acid chain: MGFRVLVLVVMATTSALPFTFSEEPGRSPFRPALRSEEAQALRHGLTLLLARRADGQPPDMRQPEMRRPEMRRPEVRQPEFAETPVGQKRGGLGRCIYNCMNSGGGLSFIQCKTMCY.

A signal peptide spans 1-22; sequence MGFRVLVLVVMATTSALPFTFS. Positions 23–90 are excised as a propeptide; the sequence is EEPGRSPFRP…FAETPVGQKR (68 aa). Residues 53 to 86 form a disordered region; sequence RADGQPPDMRQPEMRRPEMRRPEVRQPEFAETPV. Residues 62–80 are compositionally biased toward basic and acidic residues; sequence RQPEMRRPEMRRPEVRQPE. Disulfide bonds link cysteine 96/cysteine 116 and cysteine 100/cysteine 112.

This sequence belongs to the conotoxin R superfamily. In terms of tissue distribution, expressed by the venom duct.

It localises to the secreted. The sequence is that of Conotoxin vil14a from Conus villepinii (Villepin's cone).